The primary structure comprises 79 residues: uncharacterized protein (79 aa).

Positions 1–20 (MSQLMGIITRLQSLQETAEA) are cleaved as a signal peptide.

This is an uncharacterized protein from Bacillus subtilis (strain 168).